Reading from the N-terminus, the 112-residue chain is Putative regulatory protein DP2861 (112 aa).

The protein belongs to the RemA family.

This chain is Putative regulatory protein DP2861, found in Desulfotalea psychrophila (strain LSv54 / DSM 12343).